A 293-amino-acid polypeptide reads, in one-letter code: Nucleotide-binding protein Bcer98_3698 (293 aa).

14 to 21 (GMSGAGKT) is an ATP binding site. 65–68 (DLRG) lines the GTP pocket.

The protein belongs to the RapZ-like family.

Displays ATPase and GTPase activities. This is Nucleotide-binding protein Bcer98_3698 from Bacillus cytotoxicus (strain DSM 22905 / CIP 110041 / 391-98 / NVH 391-98).